Reading from the N-terminus, the 204-residue chain is Methylthioribulose-1-phosphate dehydratase (204 aa).

2 residues coordinate Zn(2+): H94 and H96.

It belongs to the aldolase class II family. MtnB subfamily. It depends on Zn(2+) as a cofactor.

The enzyme catalyses 5-(methylsulfanyl)-D-ribulose 1-phosphate = 5-methylsulfanyl-2,3-dioxopentyl phosphate + H2O. It participates in amino-acid biosynthesis; L-methionine biosynthesis via salvage pathway; L-methionine from S-methyl-5-thio-alpha-D-ribose 1-phosphate: step 2/6. In terms of biological role, catalyzes the dehydration of methylthioribulose-1-phosphate (MTRu-1-P) into 2,3-diketo-5-methylthiopentyl-1-phosphate (DK-MTP-1-P). The chain is Methylthioribulose-1-phosphate dehydratase from Citrobacter koseri (strain ATCC BAA-895 / CDC 4225-83 / SGSC4696).